A 389-amino-acid polypeptide reads, in one-letter code: Acetate kinase (389 aa).

Asn-7 lines the Mg(2+) pocket. Lys-14 contributes to the ATP binding site. Arg-88 lines the substrate pocket. Asp-145 functions as the Proton donor/acceptor in the catalytic mechanism. ATP is bound by residues 205-209, 279-281, and 324-328; these read HLGNG, DLR, and GIGEN. Glu-375 is a binding site for Mg(2+).

Belongs to the acetokinase family. In terms of assembly, homodimer. Mg(2+) serves as cofactor. It depends on Mn(2+) as a cofactor.

The protein resides in the cytoplasm. The enzyme catalyses acetate + ATP = acetyl phosphate + ADP. It functions in the pathway metabolic intermediate biosynthesis; acetyl-CoA biosynthesis; acetyl-CoA from acetate: step 1/2. In terms of biological role, catalyzes the formation of acetyl phosphate from acetate and ATP. Can also catalyze the reverse reaction. The polypeptide is Acetate kinase (Sulfurimonas denitrificans (strain ATCC 33889 / DSM 1251) (Thiomicrospira denitrificans (strain ATCC 33889 / DSM 1251))).